A 192-amino-acid polypeptide reads, in one-letter code: Probable GTP-binding protein EngB (192 aa).

In terms of domain architecture, EngB-type G spans 22–192 (SLPEIVFVGR…LLEQLENYTG (171 aa)). GTP is bound by residues 30–37 (GRSNVGKS), 57–61 (GKTQL), 75–78 (DLPG), 142–145 (TKYD), and 172–174 (YSA). Mg(2+) contacts are provided by S37 and T59.

This sequence belongs to the TRAFAC class TrmE-Era-EngA-EngB-Septin-like GTPase superfamily. EngB GTPase family. It depends on Mg(2+) as a cofactor.

In terms of biological role, necessary for normal cell division and for the maintenance of normal septation. This is Probable GTP-binding protein EngB from Prosthecochloris aestuarii (strain DSM 271 / SK 413).